Here is a 201-residue protein sequence, read N- to C-terminus: MSKVLVLKSSILAGYSQSNQLADHFTTQWQSAHPDDSITVRDLAAQPIPVLDGELVGALRPSDATLTPRQQEALKLSDDLIAELQAHDVIVIAAPMYNFNIPTQLKNYFDLVARAGVTFRYTEQGPEGLVKGKRAIVLTSRGGIHKGTPTDLLEPYLRVFLGFLGLTDLEFVFAEGYGYGPDVAQKATEDAKTQLSQLVTA.

Residues Ser-10, 16–18 (SQS), 96–99 (MYNF), and 140–143 (SRGG) each bind FMN.

The protein belongs to the azoreductase type 1 family. In terms of assembly, homodimer. The cofactor is FMN.

The catalysed reaction is 2 a quinone + NADH + H(+) = 2 a 1,4-benzosemiquinone + NAD(+). It carries out the reaction N,N-dimethyl-1,4-phenylenediamine + anthranilate + 2 NAD(+) = 2-(4-dimethylaminophenyl)diazenylbenzoate + 2 NADH + 2 H(+). Quinone reductase that provides resistance to thiol-specific stress caused by electrophilic quinones. Its function is as follows. Also exhibits azoreductase activity. Catalyzes the reductive cleavage of the azo bond in aromatic azo compounds to the corresponding amines. The protein is FMN-dependent NADH:quinone oxidoreductase of Pectobacterium atrosepticum (strain SCRI 1043 / ATCC BAA-672) (Erwinia carotovora subsp. atroseptica).